The primary structure comprises 557 residues: Formate--tetrahydrofolate ligase (557 aa).

65-72 (TPAGEGKT) contacts ATP.

It belongs to the formate--tetrahydrofolate ligase family.

It carries out the reaction (6S)-5,6,7,8-tetrahydrofolate + formate + ATP = (6R)-10-formyltetrahydrofolate + ADP + phosphate. Its pathway is one-carbon metabolism; tetrahydrofolate interconversion. In Zymomonas mobilis subsp. mobilis (strain ATCC 31821 / ZM4 / CP4), this protein is Formate--tetrahydrofolate ligase.